Consider the following 342-residue polypeptide: Aristolochene synthase prx2 (342 aa).

Positions 115, 244, 248, and 252 each coordinate Mg(2+). Arginine 340 and tyrosine 341 together coordinate (2E,6E)-farnesyl diphosphate.

This sequence belongs to the terpene synthase family. Homodimer. Mg(2+) serves as cofactor.

The catalysed reaction is (2E,6E)-farnesyl diphosphate = (+)-aristolochene + diphosphate. It participates in sesquiterpene biosynthesis; aristolochene biosynthesis; aristolochene from farnesyl diphosphate: step 1/1. Functionally, aristolochene synthase; part of the gene cluster that mediates the biosynthesis of PR-toxin, a bicyclic sesquiterpene belonging to the eremophilane class and acting as a mycotoxin. The first step of the pathway is catalyzed by the aristolochene synthase which performs the cyclization of trans,trans-farnesyl diphosphate (FPP) to the bicyclic sesquiterpene aristolochene. Following the formation of aristolochene, the non-oxygenated aristolochene is converted to the trioxygenated intermediate eremofortin B, via 7-epi-neopetasone. This conversion appears to involve three enzymes, a hydroxysterol oxidase-like enzyme, the quinone-oxidase prx3 that forms the quinone-type-structure in the bicyclic nucleus of aristolochene with the C8-oxo group and the C-3 hydroxyl group, and the P450 monooxygenase prx9 that introduces the epoxide at the double bond between carbons 1 and 2. No monoxy or dioxy-intermediates have been reported to be released to the broth, so these three early oxidative reactions may be coupled together. Eremofortin B is further oxidized by another P450 monooxygenase, that introduces a second epoxide between carbons 7 and 11 prior to acetylation to eremofortin A by the acetyltransferase prx11. The second epoxidation may be performed by a second P450 monooxygenase. After the acetylation step, the conversion of eremofortin A to eremofortin C and then to PR-toxin requires only two enzymes. First the conversion of eremofortin A to eremofortin C proceeds by oxidation of the side chain of the molecule at C-12 and is catalyzed by the short-chain oxidoreductase prx1. The cytochrome P450 monooxygenase prx8 also plays a role in this step. The primary alcohol formed at C-12 is finally oxidized by the short-chain alcohol dehydrogenase prx4 that forms PR-toxin. The polypeptide is Aristolochene synthase prx2 (Penicillium rubens (strain ATCC 28089 / DSM 1075 / NRRL 1951 / Wisconsin 54-1255) (Penicillium chrysogenum)).